The sequence spans 276 residues: MSIDSLPPLREVIERHDLMPKKSLGQNFLFDLNLTSKIARQAGDLRDQPVIEVGPGPGGLTRALLAQGAYVTAIERDDRCLEALAEIAAHYPGRLRIIAGDALEQDFTALFPEGPKPRIVANLPYNVGTQLLLNWLLVEPWPPFYSSMTLMFQREVAERIVAKLDSDHYGRLGVLAGWRTQAKIAFDVPPQAFTPPPKVMSSVVHIVPRETPLPCRAEALGQITQAAFGQRRKMLRQSLKSIGGAALLEKTGIDGTRRAETLSVEEFVALANACLP.

Positions 27, 29, 54, 75, 101, and 122 each coordinate S-adenosyl-L-methionine.

Belongs to the class I-like SAM-binding methyltransferase superfamily. rRNA adenine N(6)-methyltransferase family. RsmA subfamily.

The protein resides in the cytoplasm. It catalyses the reaction adenosine(1518)/adenosine(1519) in 16S rRNA + 4 S-adenosyl-L-methionine = N(6)-dimethyladenosine(1518)/N(6)-dimethyladenosine(1519) in 16S rRNA + 4 S-adenosyl-L-homocysteine + 4 H(+). Its function is as follows. Specifically dimethylates two adjacent adenosines (A1518 and A1519) in the loop of a conserved hairpin near the 3'-end of 16S rRNA in the 30S particle. May play a critical role in biogenesis of 30S subunits. The sequence is that of Ribosomal RNA small subunit methyltransferase A from Brucella melitensis biotype 1 (strain ATCC 23456 / CCUG 17765 / NCTC 10094 / 16M).